Consider the following 350-residue polypeptide: Inhibin beta E chain (350 aa).

Residues 1-21 (MGLSNVQLWTILLWALAWVQS) form the signal peptide. Residues 22–236 (TRSACPSCGA…EPGAGRARRR (215 aa)) constitute a propeptide that is removed on maturation. Residue N198 is glycosylated (N-linked (GlcNAc...) asparagine). Cystine bridges form between C240/C248, C247/C315, C276/C347, and C280/C349.

The protein belongs to the TGF-beta family. In terms of assembly, homodimeric or heterodimeric through association with alpha and beta subunits, linked by one or more disulfide bonds. Inhibins are heterodimers of one alpha and one beta subunit. Activins are homo- or heterodimers of beta subunits only.

Its subcellular location is the secreted. Inhibins and activins inhibit and activate, respectively, the secretion of follitropin by the pituitary gland. Inhibins/activins are involved in regulating a number of diverse functions such as hypothalamic and pituitary hormone secretion, gonadal hormone secretion, germ cell development and maturation, erythroid differentiation, insulin secretion, nerve cell survival, embryonic axial development or bone growth, depending on their subunit composition. Inhibins appear to oppose the functions of activins. In terms of biological role, activin E is a homodimer of INHBE secreted by the liver that plays a crucial role in regulating metabolic homeostasis particularly in lipid metabolism and energy homeostasis. Plays a central role in the regulation of adipose tissue lipolysis by preventing the influx of fatty acids from adipose tissue into the liver. Mechanistically, signals via ACVR1C to activate SMAD2/3 signaling, suppressing PPARG target genes in adipose tissue, thereby reducing liver lipid content and improving glycemic control. Induces beige adipocyte formation and thermogenesis in response to cold exposure. In Rattus norvegicus (Rat), this protein is Inhibin beta E chain (Inhbe).